The primary structure comprises 139 residues: Transthyretin-like protein 5 (139 aa).

The N-terminal stretch at 1–15 is a signal peptide; that stretch reads MKLIILLCLVASSYA.

This sequence belongs to the nematode transthyretin-like family.

It localises to the secreted. In Caenorhabditis elegans, this protein is Transthyretin-like protein 5 (ttr-5).